Consider the following 281-residue polypeptide: Undecaprenyl-diphosphatase (281 aa).

Helical transmembrane passes span 5–25, 48–68, 92–112, 118–138, 154–174, 192–212, 226–246, and 261–281; these read LFVL…FLPI, VKMY…LLYW, FWFM…LLDA, LMTP…MIYA, VTPK…IPGM, VVAA…YSLL, AELI…VAVI, and FAIY…MGFF.

The protein belongs to the UppP family.

It is found in the cell membrane. It catalyses the reaction di-trans,octa-cis-undecaprenyl diphosphate + H2O = di-trans,octa-cis-undecaprenyl phosphate + phosphate + H(+). Functionally, catalyzes the dephosphorylation of undecaprenyl diphosphate (UPP). Confers resistance to bacitracin. The chain is Undecaprenyl-diphosphatase from Ruminiclostridium cellulolyticum (strain ATCC 35319 / DSM 5812 / JCM 6584 / H10) (Clostridium cellulolyticum).